Consider the following 79-residue polypeptide: DGQSIYESGTSPTCASCHDRGTAGAPKINEPGDWDGIDLDAEALVDSTMDGKGAMPAYDGRADRDEVKEAVEYMLSTIE.

A compositionally biased stretch (polar residues) spans 1 to 14 (DGQSIYESGTSPTC). Positions 1–35 (DGQSIYESGTSPTCASCHDRGTAGAPKINEPGDWD) are disordered. Heme c is bound by residues cysteine 14, cysteine 17, histidine 18, and methionine 55.

In terms of processing, binds 1 heme c group covalently per subunit.

This chain is Cytochrome c-551, found in Halorhodospira halochloris (Ectothiorhodospira halochloris).